The primary structure comprises 528 residues: RNA polymerase sigma factor SigA (528 aa).

Over residues 1 to 10 the composition is skewed to polar residues; it reads MAATKASTAT. Positions 1–211 are disordered; that stretch reads MAATKASTAT…FVWDEDESEA (211 aa). Low complexity-rich tracts occupy residues 19–31, 38–56, and 80–92; these read TKSPAASASGAKT, AKSASGSPPAKRATKPAAR, and AAKSAAAKAPSAR. Basic and acidic residues predominate over residues 100–109; that stretch reads APKDAQHEAA. A compositionally biased stretch (acidic residues) spans 110–173; the sequence is TDPEDALDSV…DDEDHEDLEA (64 aa). Residues 295–365 form a sigma-70 factor domain-2 region; it reads LLEANLRLVV…TRAMADQART (71 aa). An Interaction with polymerase core subunit RpoC motif is present at residues 319–322; sequence DLIQ. Residues 374 to 450 are sigma-70 factor domain-3; the sequence is EVINKLGRIQ…DSEAVVAVDA (77 aa). The tract at residues 463-516 is sigma-70 factor domain-4; it reads VLDTLSEREAGVVRLRFGLTDGQPRTLDEIGQVYGVTRERIRQIESKTMSKLRH. A DNA-binding region (H-T-H motif) is located at residues 489–508; sequence LDEIGQVYGVTRERIRQIES.

Belongs to the sigma-70 factor family. RpoD/SigA subfamily. In terms of assembly, interacts transiently with the RNA polymerase catalytic core.

It localises to the cytoplasm. Sigma factors are initiation factors that promote the attachment of RNA polymerase to specific initiation sites and are then released. This sigma factor is the primary sigma factor during exponential growth. The protein is RNA polymerase sigma factor SigA of Mycobacterium bovis (strain ATCC BAA-935 / AF2122/97).